Reading from the N-terminus, the 364-residue chain is Methylthioribose-1-phosphate isomerase (364 aa).

Substrate contacts are provided by residues Arg53–Ala55, Arg90, and Gln203. Asp244 serves as the catalytic Proton donor. Asn254–Lys255 is a substrate binding site.

It belongs to the eIF-2B alpha/beta/delta subunits family. MtnA subfamily.

It catalyses the reaction 5-(methylsulfanyl)-alpha-D-ribose 1-phosphate = 5-(methylsulfanyl)-D-ribulose 1-phosphate. The protein operates within amino-acid biosynthesis; L-methionine biosynthesis via salvage pathway; L-methionine from S-methyl-5-thio-alpha-D-ribose 1-phosphate: step 1/6. In terms of biological role, catalyzes the interconversion of methylthioribose-1-phosphate (MTR-1-P) into methylthioribulose-1-phosphate (MTRu-1-P). This chain is Methylthioribose-1-phosphate isomerase, found in Brucella anthropi (strain ATCC 49188 / DSM 6882 / CCUG 24695 / JCM 21032 / LMG 3331 / NBRC 15819 / NCTC 12168 / Alc 37) (Ochrobactrum anthropi).